Consider the following 221-residue polypeptide: Large ribosomal subunit protein uL1 (221 aa).

The protein belongs to the universal ribosomal protein uL1 family. In terms of assembly, part of the 50S ribosomal subunit.

Probably involved in E site tRNA release. Binds directly to 23S rRNA. In terms of biological role, protein L1 is also a translational repressor protein, it controls the translation of its operon by binding to its mRNA. In Sulfolobus acidocaldarius (strain ATCC 33909 / DSM 639 / JCM 8929 / NBRC 15157 / NCIMB 11770), this protein is Large ribosomal subunit protein uL1.